The primary structure comprises 642 residues: 1,4-alpha-glucan branching enzyme GlgB (642 aa).

Aspartate 304 functions as the Nucleophile in the catalytic mechanism. The Proton donor role is filled by glutamate 355.

The protein belongs to the glycosyl hydrolase 13 family. GlgB subfamily. In terms of assembly, monomer.

It catalyses the reaction Transfers a segment of a (1-&gt;4)-alpha-D-glucan chain to a primary hydroxy group in a similar glucan chain.. It functions in the pathway glycan biosynthesis; glycogen biosynthesis. In terms of biological role, catalyzes the formation of the alpha-1,6-glucosidic linkages in glycogen by scission of a 1,4-alpha-linked oligosaccharide from growing alpha-1,4-glucan chains and the subsequent attachment of the oligosaccharide to the alpha-1,6 position. The protein is 1,4-alpha-glucan branching enzyme GlgB of Streptococcus pneumoniae serotype 2 (strain D39 / NCTC 7466).